The primary structure comprises 835 residues: Leucine--tRNA ligase (835 aa).

The 'HIGH' region motif lies at 36–46 (PYPSGKIHVGH). The 'KMSKS' region motif lies at 602–606 (KMSKS). Lys-605 is a binding site for ATP.

It belongs to the class-I aminoacyl-tRNA synthetase family.

The protein resides in the cytoplasm. The enzyme catalyses tRNA(Leu) + L-leucine + ATP = L-leucyl-tRNA(Leu) + AMP + diphosphate. In Rickettsia massiliae (strain Mtu5), this protein is Leucine--tRNA ligase.